The primary structure comprises 754 residues: Polycomb protein mes-3 (754 aa).

The interval 1–83 (MTPATAEVKV…PTKLENIQKT (83 aa)) is disordered. Residues 31–40 (ARREEEKENL) show a composition bias toward basic and acidic residues. Over residues 51–61 (SSEAGSSRESS) the composition is skewed to low complexity.

In terms of assembly, forms a heterotrimeric complex with the Polycomb proteins mes-2 and mes-3. Does not interact with mes-4. Interacts with nyfa-1. As to expression, in adults, it is predominantly expressed in the germline, and weakly expressed in intestinal cells.

The protein resides in the nucleus. In terms of biological role, component of a Polycomb group (PcG) complex. PcG proteins act by forming multiprotein complexes, which are required to maintain the transcriptionally repressive state of homeotic genes throughout development. In association with the nfya-1-NF-Y complex, may play a role in repressing the expression of the homeobox protein egl-5 in tissues such as the head. PcG proteins are not required to initiate repression, but to maintain it during later stages of development. The mes-2/mes-3/mes-6 complex may participate in the global inactivation of the X chromosomes in germline cells. The complex may act via methylation of histone H3 'Lys-27', rendering chromatin heritably changed in its expressibility. This complex is required to exclude mes-4 from the inactivated X-chromosomes in germline cells. The chain is Polycomb protein mes-3 from Caenorhabditis elegans.